The chain runs to 305 residues: MSQPSVILATASYDHTIRFWEAETGRCYRTIQYPDSHVNRLEITPDKHYLAAACNPHIRLFDVNSNSPQPVMTYDSHTNNVMAVGFQCDAKWMYSGSEDGTVKIWDLRAPGCQKEYESVAAVNTVVLHPNQTELISGDQNGNIRVWDLRANSCSCELVPEVDTAVRSLTVMWDGTMVVAANNRGTCYVWRLLRGKQTMTEFEPLHKLQAHNGHILKCLLSPANKYLATASSDKTVKIWNVDGFKLEKVLTGHQRWVWDCVFSVDGEFLVTASSDMTARLWSMPAGKEVKVYQGHHKATVCCALHD.

WD repeat units follow at residues 1-30 (MSQP…CYRT), 33-71 (YPDS…PQPV), 76-115 (SHTN…CQKE), 117-156 (ESVA…CSCE), 160-199 (EVDT…QTMT), 209-248 (AHNG…LEKV), and 251-292 (GHQR…KVYQ).

This sequence belongs to the WD repeat LST8 family. As to quaternary structure, the target of rapamycin complex 1 (TORC1) is composed of at least RAPTOR, LST8 and TOR. Interacts with TOR. Expressed in the root central cylinder, root tips, emerging lateral roots, vasculature of cotyledons, leaf stomata, leaf stipules, anthers, pollen, filaments, and vasculature of petals and sepals.

Its subcellular location is the endosome. Component of TORC1 complex, which is an essential cell growth regulator that controls plant development. Acts by activating transcription, protein synthesis and ribosome biogenesis, and inhibiting mRNA degradation and autophagy. Involved in regulating amino acid accumulation and the synthesis of myo-inositol and raffinose during plant adaptation to long days. Involved in the regulation of plant growth and abscisic acid (ABA) accumulation. Acts as a positive regulation of the ABA biosynthetic genes ZEP, NCED3 and AAO3, and negative regulator of the ABA catabolic genes CYP707A2 and CYP707A3. The sequence is that of Target of rapamycin complex subunit LST8-1 from Arabidopsis thaliana (Mouse-ear cress).